A 450-amino-acid chain; its full sequence is Phosphoglucosamine mutase 2 (450 aa).

Catalysis depends on Ser101, which acts as the Phosphoserine intermediate. Positions 101, 245, 247, and 249 each coordinate Mg(2+). Ser101 carries the phosphoserine modification.

The protein belongs to the phosphohexose mutase family. Requires Mg(2+) as cofactor. Activated by phosphorylation.

The enzyme catalyses alpha-D-glucosamine 1-phosphate = D-glucosamine 6-phosphate. In terms of biological role, catalyzes the conversion of glucosamine-6-phosphate to glucosamine-1-phosphate. This Shewanella frigidimarina (strain NCIMB 400) protein is Phosphoglucosamine mutase 2.